Here is a 306-residue protein sequence, read N- to C-terminus: Arylesterase (306 aa).

Positions His-82–Gly-84 match the Involved in the stabilization of the negatively charged intermediate by the formation of the oxyanion hole motif. Catalysis depends on residues Ser-156, Asp-251, and His-281.

As to quaternary structure, monomer.

The enzyme catalyses a phenyl acetate + H2O = a phenol + acetate + H(+). It catalyses the reaction An aryl dialkyl phosphate + H2O = dialkyl phosphate + an aryl alcohol.. Completely inhibited by chemical modifiers that are specific to Cys (HgCl(2) and p-chloromercuribenzoic acid), His (diethyl pyrocarbonate) and Ser (diisopropyl fluorophosphate and phenylmethanesulfonyl fluoride). No significant effect with chemical modifiers specific to Lys (pyridoxal 5'-phosphate) and Arg (phenylglyoxal). Not inhibited by inhibitors of A-esterases (paraoxon) or C-esterases (physostigmine/eserine). Activity is also not effected by incubation with 5 mM divalent cations for 30 minutes at 30 degrees Celsius or with 10 mM EDTA for 60 minutes at 75 degrees Celsius. Has a broad substrate specificity. Hydrolyzes various p-nitrophenyl phosphates, aromatic esters and p-nitrophenyl fatty acids in vitro. Most active against paraoxon, phenyl acetate and p-nitrophenyl caproate (C6), respectively. Also has tributyrinase activity, but shows no hydrolytic activity toward other triacylglycerols including tricaprylin, trimyristin, tripalmitin or triolein in vitro. The chain is Arylesterase from Saccharolobus solfataricus (Sulfolobus solfataricus).